The following is a 117-amino-acid chain: Large ribosomal subunit protein bL19 (117 aa).

This sequence belongs to the bacterial ribosomal protein bL19 family.

In terms of biological role, this protein is located at the 30S-50S ribosomal subunit interface and may play a role in the structure and function of the aminoacyl-tRNA binding site. In Paenarthrobacter aurescens (strain TC1), this protein is Large ribosomal subunit protein bL19.